A 439-amino-acid polypeptide reads, in one-letter code: Xylose isomerase (439 aa).

Active-site residues include His99 and Asp102. The Mg(2+) site is built by Glu230, Glu266, His269, Asp294, Asp305, Asp307, and Asp337.

It belongs to the xylose isomerase family. Homotetramer. Mg(2+) is required as a cofactor.

Its subcellular location is the cytoplasm. The catalysed reaction is alpha-D-xylose = alpha-D-xylulofuranose. The chain is Xylose isomerase from Oceanobacillus iheyensis (strain DSM 14371 / CIP 107618 / JCM 11309 / KCTC 3954 / HTE831).